The sequence spans 416 residues: CC-adding tRNA nucleotidyltransferase (416 aa).

Position 31–34 (31–34 (GAVR)) interacts with CTP. Positions 46 and 48 each coordinate Mg(2+). CTP is bound by residues 106–107 (RD), Asn111, 148–157 (DPLRLLRAYR), and Arg188.

Belongs to the tRNA nucleotidyltransferase/poly(A) polymerase family. It depends on Mg(2+) as a cofactor.

The catalysed reaction is a tRNA precursor + 2 CTP = a tRNA with a 3' CC end + 2 diphosphate. Functionally, tRNA nucleotidyltransferase involved in the synthesis of the tRNA CCA terminus. Adds the two cytidine residues to tRNA. The protein is CC-adding tRNA nucleotidyltransferase of Synechocystis sp. (strain ATCC 27184 / PCC 6803 / Kazusa).